We begin with the raw amino-acid sequence, 628 residues long: DNA mismatch repair protein MutL (628 aa).

A disordered region spans residues 350-402 (GLPFDVSESQGNDNHINNGKSRETKSERELYERRPNPFENRLMKESNSPSVGK). Residues 356–368 (SESQGNDNHINNG) show a composition bias toward polar residues. The segment covering 369–393 (KSRETKSERELYERRPNPFENRLMK) has biased composition (basic and acidic residues).

It belongs to the DNA mismatch repair MutL/HexB family.

In terms of biological role, this protein is involved in the repair of mismatches in DNA. It is required for dam-dependent methyl-directed DNA mismatch repair. May act as a 'molecular matchmaker', a protein that promotes the formation of a stable complex between two or more DNA-binding proteins in an ATP-dependent manner without itself being part of a final effector complex. In Wolbachia sp. subsp. Brugia malayi (strain TRS), this protein is DNA mismatch repair protein MutL.